Reading from the N-terminus, the 288-residue chain is MKKLFLIGKSLKHSISPFIHNRILSEFDIDAIYSNLELLDTEMLKEFVEMVRKDEDVVGFNITIPYKEDILEFCDEVSEDVRIIKAANTVKKEDGKLLAYNTDWIGFKRSLEDRGVDVKDKKILVLGSGGAAKACIYGLYRMGAKEVFVANRTYEKAEKLKEVFQDILKILPVEWLRRYEFKYDIIINTTSVGMFPNIESSPFDFENYVAGVPVFVYDMIYNPLKTAFLKEAEKKGIKIENGLKMLVYQAIEAEMIWFDIVNLSPNFLLEILNDTEKNFGLGIYKVIG.

Shikimate-binding positions include 14-16 (SIS) and threonine 63. Lysine 67 serves as the catalytic Proton acceptor. Residue glutamate 79 participates in NADP(+) binding. Residues asparagine 88 and aspartate 103 each coordinate shikimate. NADP(+)-binding positions include 127-131 (GSGGA), 151-156 (NRTYEK), and methionine 219. Residue tyrosine 221 participates in shikimate binding. Glycine 242 contributes to the NADP(+) binding site.

This sequence belongs to the shikimate dehydrogenase family. In terms of assembly, homodimer.

The enzyme catalyses shikimate + NADP(+) = 3-dehydroshikimate + NADPH + H(+). The protein operates within metabolic intermediate biosynthesis; chorismate biosynthesis; chorismate from D-erythrose 4-phosphate and phosphoenolpyruvate: step 4/7. Functionally, involved in the biosynthesis of the chorismate, which leads to the biosynthesis of aromatic amino acids. Catalyzes the reversible NADPH linked reduction of 3-dehydroshikimate (DHSA) to yield shikimate (SA). The polypeptide is Shikimate dehydrogenase (NADP(+)) (Caldicellulosiruptor bescii (strain ATCC BAA-1888 / DSM 6725 / KCTC 15123 / Z-1320) (Anaerocellum thermophilum)).